Consider the following 193-residue polypeptide: Interferon lambda-2 (193 aa).

Residues 1-19 (MLLLLLPLLLAAVLTRTQA) form the signal peptide. Residue asparagine 105 is glycosylated (N-linked (GlcNAc...) asparagine).

It belongs to the lambda interferon family.

It localises to the secreted. In terms of biological role, cytokine with antiviral, antitumour and immunomodulatory activities. Plays a critical role in the antiviral host defense, predominantly in the epithelial tissues. Acts as a ligand for the heterodimeric class II cytokine receptor composed of IL10RB and IFNLR1, and receptor engagement leads to the activation of the JAK/STAT signaling pathway resulting in the expression of IFN-stimulated genes (ISG), which mediate the antiviral state. Has a restricted receptor distribution and therefore restricted targets: is primarily active in epithelial cells and this cell type-selective action is because of the epithelial cell-specific expression of its receptor IFNLR1. Seems not to be essential for early virus-activated host defense in vaginal infection, but plays an important role in Toll-like receptor (TLR)-induced antiviral defense. Plays a significant role in the antiviral immune defense in the intestinal epithelium. Exerts an immunomodulatory effect by up-regulating MHC class I antigen expression. This is Interferon lambda-2 (Ifnl2) from Mus musculus (Mouse).